A 140-amino-acid polypeptide reads, in one-letter code: Putative ABC transporter permease protein ORF1 (140 aa).

The 133-residue stretch at 1-133 (DPNVAFYSVV…ITTAGIFAYF (133 aa)) folds into the ABC transmembrane type-1 domain. Helical transmembrane passes span 9–29 (VVAV…IAAL), 65–85 (TACI…YVMT), and 115–135 (TIAS…YFVT).

It belongs to the binding-protein-dependent transport system permease family. MalFG subfamily.

It is found in the cell membrane. Its function is as follows. May play a role in sugar transport. The chain is Putative ABC transporter permease protein ORF1 from Caldicellulosiruptor sp. (strain Rt8B.4).